A 372-amino-acid polypeptide reads, in one-letter code: MPARPIPVPAFALALALAAALAVPAPAAAARVKELADVVGVRENALYGYGLVVGLAGTGDSERVLFTQQSVAGMLGRLGIRIDPKDVRARNVAAVMVTARLPPFARPGTRIDVAVASMGNARSLAGGLLLVTPLAGGDGKVYAVGQGPVQVAGYDAGAGGAELRKNTPTSGRVAGGAAVERAVDFALGQAPLVLALRRPDLTTASRLAAAVNAKLGAGTARAVDPAAVELSPPPARKDDVVGFLAEIELLEVEADQRARVVVSERTGTVVAGEGVRLRPVAVAHGGLQVRVQRDPAVSQPAPFGAGRTVEATRDRAAATEAGGGVVALPATASVQDLARALDLLGASPRDLVAVLEAIRAAGALDAELEVLE.

The N-terminal stretch at 1–29 (MPARPIPVPAFALALALAAALAVPAPAAA) is a signal peptide.

It belongs to the FlgI family. As to quaternary structure, the basal body constitutes a major portion of the flagellar organelle and consists of four rings (L,P,S, and M) mounted on a central rod.

It is found in the periplasm. Its subcellular location is the bacterial flagellum basal body. Its function is as follows. Assembles around the rod to form the L-ring and probably protects the motor/basal body from shearing forces during rotation. The sequence is that of Flagellar P-ring protein from Anaeromyxobacter dehalogenans (strain 2CP-1 / ATCC BAA-258).